The following is a 168-amino-acid chain: S-ribosylhomocysteine lyase (168 aa).

Positions 54, 58, and 128 each coordinate Fe cation.

The protein belongs to the LuxS family. As to quaternary structure, homodimer. Requires Fe cation as cofactor.

It carries out the reaction S-(5-deoxy-D-ribos-5-yl)-L-homocysteine = (S)-4,5-dihydroxypentane-2,3-dione + L-homocysteine. Functionally, involved in the synthesis of autoinducer 2 (AI-2) which is secreted by bacteria and is used to communicate both the cell density and the metabolic potential of the environment. The regulation of gene expression in response to changes in cell density is called quorum sensing. Catalyzes the transformation of S-ribosylhomocysteine (RHC) to homocysteine (HC) and 4,5-dihydroxy-2,3-pentadione (DPD). The chain is S-ribosylhomocysteine lyase from Neisseria meningitidis serogroup C / serotype 2a (strain ATCC 700532 / DSM 15464 / FAM18).